A 262-amino-acid polypeptide reads, in one-letter code: Lipoate-protein ligase A subunit 1 (262 aa).

Positions 30–226 (YGDKPILRFY…GFSETLHIDF (197 aa)) constitute a BPL/LPL catalytic domain. The ATP site is built by R72, G77, Y80, D85, P132, and K135. 2 residues coordinate Mg(2+): T137 and D138. K145, A149, and A163 together coordinate ATP. K145 contacts (R)-lipoate. A149 serves as a coordination point for Mg(2+).

Belongs to the LplA family. In terms of assembly, heterodimer composed of LplA and LplB.

It localises to the cytoplasm. The catalysed reaction is L-lysyl-[lipoyl-carrier protein] + (R)-lipoate + ATP = N(6)-[(R)-lipoyl]-L-lysyl-[lipoyl-carrier protein] + AMP + diphosphate + H(+). The protein operates within protein modification; protein lipoylation via exogenous pathway; protein N(6)-(lipoyl)lysine from lipoate: step 1/2. It functions in the pathway protein modification; protein lipoylation via exogenous pathway; protein N(6)-(lipoyl)lysine from lipoate: step 2/2. Part of a lipoate-protein ligase complex that catalyzes both the ATP-dependent activation of exogenously supplied lipoate to lipoyl-AMP and the transfer of the activated lipoyl onto the lipoyl domains of lipoate-dependent enzymes. Can also use octanoate as substrate. This chain is Lipoate-protein ligase A subunit 1 (lplA), found in Thermoplasma acidophilum (strain ATCC 25905 / DSM 1728 / JCM 9062 / NBRC 15155 / AMRC-C165).